A 422-amino-acid chain; its full sequence is Lipoyl synthase, mitochondrial (422 aa).

The N-terminal 34 residues, 1–34, are a transit peptide targeting the mitochondrion; sequence MAASSTRLRCLYASSAPAWKKSPSQSIISLSRHY. Residues 37 to 48 are compositionally biased toward polar residues; the sequence is TSSTTPSLNPDE. Positions 37-70 are disordered; sequence TSSTTPSLNPDESSSSSSSTIPKRRKTTTFRDKL. [4Fe-4S] cluster is bound by residues C146, C151, C157, C177, C181, C184, and S383. A Radical SAM core domain is found at 160–372; sequence GSDKSAATAT…RQRALEMGFL (213 aa).

It belongs to the radical SAM superfamily. Lipoyl synthase family. Requires [4Fe-4S] cluster as cofactor.

The protein resides in the mitochondrion. The catalysed reaction is [[Fe-S] cluster scaffold protein carrying a second [4Fe-4S](2+) cluster] + N(6)-octanoyl-L-lysyl-[protein] + 2 oxidized [2Fe-2S]-[ferredoxin] + 2 S-adenosyl-L-methionine + 4 H(+) = [[Fe-S] cluster scaffold protein] + N(6)-[(R)-dihydrolipoyl]-L-lysyl-[protein] + 4 Fe(3+) + 2 hydrogen sulfide + 2 5'-deoxyadenosine + 2 L-methionine + 2 reduced [2Fe-2S]-[ferredoxin]. The protein operates within protein modification; protein lipoylation via endogenous pathway; protein N(6)-(lipoyl)lysine from octanoyl-[acyl-carrier-protein]: step 2/2. In terms of biological role, catalyzes the radical-mediated insertion of two sulfur atoms into the C-6 and C-8 positions of the octanoyl moiety bound to the lipoyl domains of lipoate-dependent enzymes, thereby converting the octanoylated domains into lipoylated derivatives. In Talaromyces stipitatus (strain ATCC 10500 / CBS 375.48 / QM 6759 / NRRL 1006) (Penicillium stipitatum), this protein is Lipoyl synthase, mitochondrial.